Reading from the N-terminus, the 349-residue chain is 3-isopropylmalate dehydrogenase (349 aa).

Substrate-binding residues include R91, R101, R129, and D219. Mg(2+) is bound by residues D219, D243, and D247. NAD(+) is bound at residue 277–289 (GSAPDIAGLGKAN).

It belongs to the isocitrate and isopropylmalate dehydrogenases family. LeuB type 1 subfamily. As to quaternary structure, homodimer. Requires Mg(2+) as cofactor. Mn(2+) serves as cofactor.

The protein resides in the cytoplasm. It catalyses the reaction (2R,3S)-3-isopropylmalate + NAD(+) = 4-methyl-2-oxopentanoate + CO2 + NADH. Its pathway is amino-acid biosynthesis; L-leucine biosynthesis; L-leucine from 3-methyl-2-oxobutanoate: step 3/4. Catalyzes the oxidation of 3-carboxy-2-hydroxy-4-methylpentanoate (3-isopropylmalate) to 3-carboxy-4-methyl-2-oxopentanoate. The product decarboxylates to 4-methyl-2 oxopentanoate. The sequence is that of 3-isopropylmalate dehydrogenase from Zymomonas mobilis subsp. mobilis (strain ATCC 31821 / ZM4 / CP4).